We begin with the raw amino-acid sequence, 448 residues long: Argininosuccinate synthase (448 aa).

Residues 17–25 (AFSGGLDTS) and Ala-43 contribute to the ATP site. Tyr-99 is a binding site for L-citrulline. Gly-129 and Thr-131 together coordinate ATP. L-aspartate contacts are provided by Thr-131, Asn-135, and Asp-136. Asn-135 is an L-citrulline binding site. An ATP-binding site is contributed by Asp-136. Residues Arg-139 and Ser-192 each contribute to the L-citrulline site. Asp-194 provides a ligand contact to ATP. L-citrulline contacts are provided by Thr-201, Glu-203, and Glu-280.

The protein belongs to the argininosuccinate synthase family. Type 2 subfamily. Homotetramer.

It is found in the cytoplasm. It catalyses the reaction L-citrulline + L-aspartate + ATP = 2-(N(omega)-L-arginino)succinate + AMP + diphosphate + H(+). Its pathway is amino-acid biosynthesis; L-arginine biosynthesis; L-arginine from L-ornithine and carbamoyl phosphate: step 2/3. The polypeptide is Argininosuccinate synthase (Pectobacterium atrosepticum (strain SCRI 1043 / ATCC BAA-672) (Erwinia carotovora subsp. atroseptica)).